Reading from the N-terminus, the 640-residue chain is ETV5-related protein Ets96B (640 aa).

The segment at 315–375 is disordered; that stretch reads HADSTTTAAQ…HHGHQQAEQQ (61 aa). The stretch at 321–356 forms a coiled coil; that stretch reads TAAQQQQQQQEQQQQQQQQQQQQQHQQQLQQAAALH. The span at 322-355 shows a compositional bias: low complexity; sequence AAQQQQQQQEQQQQQQQQQQQQQHQQQLQQAAAL. Over residues 356–369 the composition is skewed to basic residues; the sequence is HPHHHHSHHGHHGH. Positions 498 to 579 form a DNA-binding region, ETS; the sequence is LQLWQFLVAL…NGERYVYRFV (82 aa). The segment covering 609–624 has biased composition (polar residues); the sequence is LAKTPPTSGDSQTQSP. The tract at residues 609-628 is disordered; the sequence is LAKTPPTSGDSQTQSPRVAK.

Belongs to the ETS family. As to expression, in the adult brain, expressed almost exclusively in dopaminergic neurons.

Its subcellular location is the nucleus. Its function is as follows. Required in dopaminergic neurons to regulate expression of genes involved in dopamine signaling. Decreases expression of the dopamine transporter DAT and increases expression of the dopamine transporter Vmat and the tyrosine 3-monooxygenase ple which is involved in dopamine biosynthesis. Also involved in negatively regulating the expression of a group of endoplasmic reticulum proteins, the molecular chaperone Calr and the protein disulfide isomerases CaBP1 and ERp60. In Drosophila melanogaster (Fruit fly), this protein is ETV5-related protein Ets96B.